The following is a 131-amino-acid chain: Small ribosomal subunit protein uS11 (131 aa).

This sequence belongs to the universal ribosomal protein uS11 family. Part of the 30S ribosomal subunit. Interacts with proteins S7 and S18. Binds to IF-3.

Functionally, located on the platform of the 30S subunit, it bridges several disparate RNA helices of the 16S rRNA. Forms part of the Shine-Dalgarno cleft in the 70S ribosome. The chain is Small ribosomal subunit protein uS11 from Pelobacter propionicus (strain DSM 2379 / NBRC 103807 / OttBd1).